Here is a 143-residue protein sequence, read N- to C-terminus: Regulator of ribonuclease activity B (143 aa).

Positions 117–135 (DPDAEYDDEDGENEDDESE) are enriched in acidic residues. Positions 117-143 (DPDAEYDDEDGENEDDESESDKSSRLH) are disordered.

Belongs to the RraB family. As to quaternary structure, interacts with the C-terminal region of Rne.

It localises to the cytoplasm. Globally modulates RNA abundance by binding to RNase E (Rne) and regulating its endonucleolytic activity. Can modulate Rne action in a substrate-dependent manner by altering the composition of the degradosome. In Proteus mirabilis (strain HI4320), this protein is Regulator of ribonuclease activity B.